A 285-amino-acid chain; its full sequence is Bifunctional protein FolD (285 aa).

NADP(+)-binding positions include 165-167 and Ser190; that span reads GRS.

The protein belongs to the tetrahydrofolate dehydrogenase/cyclohydrolase family. Homodimer.

It catalyses the reaction (6R)-5,10-methylene-5,6,7,8-tetrahydrofolate + NADP(+) = (6R)-5,10-methenyltetrahydrofolate + NADPH. The catalysed reaction is (6R)-5,10-methenyltetrahydrofolate + H2O = (6R)-10-formyltetrahydrofolate + H(+). It participates in one-carbon metabolism; tetrahydrofolate interconversion. In terms of biological role, catalyzes the oxidation of 5,10-methylenetetrahydrofolate to 5,10-methenyltetrahydrofolate and then the hydrolysis of 5,10-methenyltetrahydrofolate to 10-formyltetrahydrofolate. The chain is Bifunctional protein FolD from Staphylococcus carnosus (strain TM300).